The following is a 718-amino-acid chain: MKIIVAAEELPICASRMEPSEAIKNWISTPLKKIPHPDKASKIQIEFGDRSKESLHLFAKPHFMVPDMLDDDEMFFVGAPGFYSPEEFSDEDCRRIEESMKAYRCYPIFQKRVKYSKMIEEILGKNTYEFVQSNFDHANMFARYKEYNTRWHEKIMEIYEEGDVVWVMDHSLFLLPGMLGNSIPVGMSASVPFSSLLKCIPFWEQIFSSILCCRYIEFNESSSKESFDLLVSQKTGFCMGDPGYKDIREPLTCVGKKGIDKDVLLKMSSEVHEFEGLGKGKVILLPSDSQTHLLGVEAYLSRYGKEITVLFLRTRVLNGDSDKQAEVMRLREYLEINYKVLSREFTPASDPEFISMLKRCDLCHCPEVADVCSLFGIPVVRNNPYDFFDIADEINENLMQRGEGSKEGSSEVIGKMEWKKRFMTSLLSISGMEYDVDLEPKEPRIRSSLSMDQTGHKKVDAKKKPGIRKKNREKEEAVEIILNNKEDANAARIVNDFKKSKARTLVMDYDGTLTNIVARPPMAAPTQEIKDLLIRLGKICRVVISTGRSVEDCDKFFPKEIEVFAEHGACHRIDGKWKEGGTFPQKDLAWRIGQFFLARTPGSELERKKTGYAFHFRNVSPLIGVKQARALFELLMRVCKDYVKKGNHVIEVRSSKKSCAMEKIEEGFVLCAGDDVADEDMFDVCKGYTIKVGDQSTSAAYRVKDPENFRMLLGRLLE.

Residues 449-470 (LSMDQTGHKKVDAKKKPGIRKK) form a disordered region. Positions 459–470 (VDAKKKPGIRKK) are enriched in basic residues.

The protein in the N-terminal section; belongs to the glycosyltransferase 20 family. This sequence in the C-terminal section; belongs to the trehalose phosphatase family.

The enzyme catalyses alpha,alpha-trehalose 6-phosphate + H2O = alpha,alpha-trehalose + phosphate. In Encephalitozoon cuniculi (strain GB-M1) (Microsporidian parasite), this protein is Probable trehalose-phosphatase.